A 122-amino-acid chain; its full sequence is Probable F-box protein At4g23960 (122 aa).

Residues 1–45 (MIEQLFPEVTCYALRYLDYSSLCQLSMTSSSMRKTANDDVLWRAL) enclose the F-box domain.

The protein is Probable F-box protein At4g23960 of Arabidopsis thaliana (Mouse-ear cress).